A 1150-amino-acid polypeptide reads, in one-letter code: Serine/threonine-protein phosphatase 2A regulatory subunit B'' subunit alpha (1150 aa).

Residues 661 to 693 form a disordered region; sequence PEVIKIQNKPEKKPGTPLPPPATSPSSPRPLSP. A compositionally biased stretch (pro residues) spans 676–693; that stretch reads TPLPPPATSPSSPRPLSP. EF-hand domains follow at residues 758-793 and 972-1007; these read CPLYWKAPMFRAAGGEKTGFVTAQSFIAMWRKLLNN and RNPTSIEYWFRCMDVDGDGVLSMYELEYFYEEQCER. Residues Asp-985, Asp-987, Asp-989, and Glu-996 each contribute to the Ca(2+) site. A disordered region spans residues 1105–1132; sequence AQFQEGFEDYETDEPASPSEFGNKSNKI.

As to quaternary structure, PP2A consists of a common heterodimeric core enzyme, composed of a 36 kDa catalytic subunit (subunit C) and a 65 kDa constant regulatory subunit (PR65 or subunit A), that associates with a variety of regulatory subunits. Proteins that associate with the core dimer include three families of regulatory subunits B (the R2/B/PR55/B55, R3/B''/PR72/PR130/PR59 and R5/B'/B56 families), the 48 kDa variable regulatory subunit, viral proteins, and cell signaling molecules. Expressed in heart, brain, placenta, lung, muscle and kidney.

In terms of biological role, the B regulatory subunit might modulate substrate selectivity and catalytic activity, and might also direct the localization of the catalytic enzyme to a particular subcellular compartment. This is Serine/threonine-protein phosphatase 2A regulatory subunit B'' subunit alpha (PPP2R3A) from Homo sapiens (Human).